The sequence spans 247 residues: Type III pantothenate kinase (247 aa).

Residue 6–13 participates in ATP binding; the sequence is DVGNTHTT. 101-104 lines the substrate pocket; that stretch reads GADR. Aspartate 103 functions as the Proton acceptor in the catalytic mechanism. Aspartate 123 lines the K(+) pocket. Threonine 126 is an ATP binding site. Residue threonine 177 participates in substrate binding.

It belongs to the type III pantothenate kinase family. Homodimer. It depends on NH4(+) as a cofactor. The cofactor is K(+).

The protein resides in the cytoplasm. The catalysed reaction is (R)-pantothenate + ATP = (R)-4'-phosphopantothenate + ADP + H(+). It participates in cofactor biosynthesis; coenzyme A biosynthesis; CoA from (R)-pantothenate: step 1/5. Functionally, catalyzes the phosphorylation of pantothenate (Pan), the first step in CoA biosynthesis. The protein is Type III pantothenate kinase of Thermosipho melanesiensis (strain DSM 12029 / CIP 104789 / BI429).